Here is a 1012-residue protein sequence, read N- to C-terminus: Ankyrin repeat- and BTB/POZ domain-containing protein 3-B (1012 aa).

A helical membrane pass occupies residues 160–180 (ILSWTISVNCIAASLSALSMY). 3 ANK repeats span residues 511–540 (QGMT…DINS), 557–586 (RQAT…NVEG), and 595–624 (YTET…DPMI). The BTB domain occupies 831–897 (SDVTFLVEGK…LYCGGTDALH (67 aa)).

The protein localises to the membrane. The sequence is that of Ankyrin repeat- and BTB/POZ domain-containing protein 3-B (abtb3b) from Danio rerio (Zebrafish).